The following is a 267-amino-acid chain: Small ribosomal subunit protein uS3 (267 aa).

In terms of domain architecture, KH type-2 spans Ile43 to Lys111. Residues Phe216–Glu267 are disordered. Residues Arg241–Glu267 are compositionally biased toward low complexity.

This sequence belongs to the universal ribosomal protein uS3 family. In terms of assembly, part of the 30S ribosomal subunit. Forms a tight complex with proteins S10 and S14.

Binds the lower part of the 30S subunit head. Binds mRNA in the 70S ribosome, positioning it for translation. The chain is Small ribosomal subunit protein uS3 from Bifidobacterium longum (strain DJO10A).